The following is a 448-amino-acid chain: Deoxyguanosinetriphosphate triphosphohydrolase-like protein (448 aa).

The HD domain maps to arginine 67–glycine 260.

This sequence belongs to the dGTPase family. Type 2 subfamily.

The chain is Deoxyguanosinetriphosphate triphosphohydrolase-like protein from Aliivibrio fischeri (strain MJ11) (Vibrio fischeri).